A 487-amino-acid polypeptide reads, in one-letter code: Bifunctional protein GlmU (487 aa).

The pyrophosphorylase stretch occupies residues 1 to 232 (MAVIVLAAGA…AAELAGVNDR (232 aa)). UDP-N-acetyl-alpha-D-glucosamine-binding positions include 6 to 9 (LAAG), Lys-20, Gln-77, and 82 to 83 (GT). A Mg(2+)-binding site is contributed by Asp-107. 4 residues coordinate UDP-N-acetyl-alpha-D-glucosamine: Gly-142, Glu-157, Asn-172, and Asn-230. Asn-230 is a binding site for Mg(2+). The interval 233–253 (VQLAAAGAELNRRTVTAAMRG) is linker. Residues 254–487 (GATIVDPATT…PTSTPQADQE (234 aa)) are N-acetyltransferase. 2 residues coordinate UDP-N-acetyl-alpha-D-glucosamine: Arg-335 and Lys-353. The active-site Proton acceptor is His-365. The UDP-N-acetyl-alpha-D-glucosamine site is built by Tyr-368 and Asn-379. Residues Ala-382, 388-389 (NY), Ser-407, and Ala-425 each bind acetyl-CoA. The tract at residues 453-487 (AKKRPGTPAAEAGEAAAKRVAEGGSPTSTPQADQE) is disordered. Residues 477 to 487 (SPTSTPQADQE) are compositionally biased toward polar residues.

In the N-terminal section; belongs to the N-acetylglucosamine-1-phosphate uridyltransferase family. The protein in the C-terminal section; belongs to the transferase hexapeptide repeat family. In terms of assembly, homotrimer. Mg(2+) is required as a cofactor.

The protein resides in the cytoplasm. The catalysed reaction is alpha-D-glucosamine 1-phosphate + acetyl-CoA = N-acetyl-alpha-D-glucosamine 1-phosphate + CoA + H(+). It catalyses the reaction N-acetyl-alpha-D-glucosamine 1-phosphate + UTP + H(+) = UDP-N-acetyl-alpha-D-glucosamine + diphosphate. It functions in the pathway nucleotide-sugar biosynthesis; UDP-N-acetyl-alpha-D-glucosamine biosynthesis; N-acetyl-alpha-D-glucosamine 1-phosphate from alpha-D-glucosamine 6-phosphate (route II): step 2/2. It participates in nucleotide-sugar biosynthesis; UDP-N-acetyl-alpha-D-glucosamine biosynthesis; UDP-N-acetyl-alpha-D-glucosamine from N-acetyl-alpha-D-glucosamine 1-phosphate: step 1/1. Its pathway is bacterial outer membrane biogenesis; LPS lipid A biosynthesis. In terms of biological role, catalyzes the last two sequential reactions in the de novo biosynthetic pathway for UDP-N-acetylglucosamine (UDP-GlcNAc). The C-terminal domain catalyzes the transfer of acetyl group from acetyl coenzyme A to glucosamine-1-phosphate (GlcN-1-P) to produce N-acetylglucosamine-1-phosphate (GlcNAc-1-P), which is converted into UDP-GlcNAc by the transfer of uridine 5-monophosphate (from uridine 5-triphosphate), a reaction catalyzed by the N-terminal domain. The protein is Bifunctional protein GlmU of Corynebacterium jeikeium (strain K411).